The primary structure comprises 281 residues: Pantothenate synthetase (281 aa).

30–37 (MGYLHEGH) is an ATP binding site. The active-site Proton donor is histidine 37. Glutamine 61 provides a ligand contact to (R)-pantoate. A beta-alanine-binding site is contributed by glutamine 61. 147 to 150 (GEKD) is an ATP binding site. Residue glutamine 153 participates in (R)-pantoate binding. ATP-binding positions include isoleucine 176 and 184 to 187 (KSSR).

It belongs to the pantothenate synthetase family. Homodimer.

It is found in the cytoplasm. It catalyses the reaction (R)-pantoate + beta-alanine + ATP = (R)-pantothenate + AMP + diphosphate + H(+). The protein operates within cofactor biosynthesis; (R)-pantothenate biosynthesis; (R)-pantothenate from (R)-pantoate and beta-alanine: step 1/1. Catalyzes the condensation of pantoate with beta-alanine in an ATP-dependent reaction via a pantoyl-adenylate intermediate. The sequence is that of Pantothenate synthetase from Clostridium botulinum (strain Loch Maree / Type A3).